The primary structure comprises 892 residues: Phenylalanine--tRNA ligase beta subunit (892 aa).

Residues 39 to 150 (NPGVEGVVVG…PGLEPGMDVA (112 aa)) enclose the tRNA-binding domain. The B5 domain maps to 406 to 569 (AVPPVILLRT…RCEGYDAIPL (164 aa)). The insert stretch occupies residues 442 to 518 (VLTPADLAAD…ALLGGGESDG (77 aa)). Residues D547, D553, E556, and E557 each contribute to the Mg(2+) site. The region spanning 799-891 (PRFPAVTRDV…ALKALGAELR (93 aa)) is the FDX-ACB domain.

Belongs to the phenylalanyl-tRNA synthetase beta subunit family. Type 1 subfamily. Tetramer of two alpha and two beta subunits. Mg(2+) is required as a cofactor.

The protein resides in the cytoplasm. It carries out the reaction tRNA(Phe) + L-phenylalanine + ATP = L-phenylalanyl-tRNA(Phe) + AMP + diphosphate + H(+). The polypeptide is Phenylalanine--tRNA ligase beta subunit (Symbiobacterium thermophilum (strain DSM 24528 / JCM 14929 / IAM 14863 / T)).